The primary structure comprises 168 residues: Photosystem I assembly protein Ycf3 (168 aa).

TPR repeat units lie at residues 35-68 (AFTY…EIDP), 72-105 (SYIL…NPFL), and 120-153 (GEQA…TPGN).

It belongs to the Ycf3 family.

It localises to the plastid. Its subcellular location is the chloroplast thylakoid membrane. Essential for the assembly of the photosystem I (PSI) complex. May act as a chaperone-like factor to guide the assembly of the PSI subunits. This chain is Photosystem I assembly protein Ycf3, found in Populus alba (White poplar).